A 341-amino-acid chain; its full sequence is UDP-3-O-acylglucosamine N-acyltransferase (341 aa).

His-242 functions as the Proton acceptor in the catalytic mechanism.

This sequence belongs to the transferase hexapeptide repeat family. LpxD subfamily. Homotrimer.

It carries out the reaction a UDP-3-O-[(3R)-3-hydroxyacyl]-alpha-D-glucosamine + a (3R)-hydroxyacyl-[ACP] = a UDP-2-N,3-O-bis[(3R)-3-hydroxyacyl]-alpha-D-glucosamine + holo-[ACP] + H(+). It functions in the pathway bacterial outer membrane biogenesis; LPS lipid A biosynthesis. Functionally, catalyzes the N-acylation of UDP-3-O-acylglucosamine using 3-hydroxyacyl-ACP as the acyl donor. Is involved in the biosynthesis of lipid A, a phosphorylated glycolipid that anchors the lipopolysaccharide to the outer membrane of the cell. In Haemophilus influenzae (strain 86-028NP), this protein is UDP-3-O-acylglucosamine N-acyltransferase.